A 181-amino-acid polypeptide reads, in one-letter code: CDP-diacylglycerol--glycerol-3-phosphate 3-phosphatidyltransferase (181 aa).

The next 4 helical transmembrane spans lie at 8-28 (PNYL…LFYI), 35-55 (KLGA…GYIA), 64-84 (FGKM…TIML), and 148-168 (IIYL…LTII).

This sequence belongs to the CDP-alcohol phosphatidyltransferase class-I family.

The protein resides in the cell membrane. The catalysed reaction is a CDP-1,2-diacyl-sn-glycerol + sn-glycerol 3-phosphate = a 1,2-diacyl-sn-glycero-3-phospho-(1'-sn-glycero-3'-phosphate) + CMP + H(+). The protein operates within phospholipid metabolism; phosphatidylglycerol biosynthesis; phosphatidylglycerol from CDP-diacylglycerol: step 1/2. Its function is as follows. This protein catalyzes the committed step to the synthesis of the acidic phospholipids. The chain is CDP-diacylglycerol--glycerol-3-phosphate 3-phosphatidyltransferase (pgsA) from Rickettsia prowazekii (strain Madrid E).